The sequence spans 185 residues: Lactoylglutathione lyase (185 aa).

The tract at residues 1–22 is disordered; sequence MASEARESPANNPGLSTNRDEA. In terms of domain architecture, VOC spans 27–174; it reads IMQQTMFRIK…DGYWIEIFDL (148 aa). Substrate contacts are provided by Q30 and R34. Q30 contacts Zn(2+). E96 is a binding site for Zn(2+). Substrate contacts are provided by residues N100, R120, H124, and 154-155; that span reads KM. H124 is a Zn(2+) binding site. E170 lines the Zn(2+) pocket. E170 (proton donor/acceptor) is an active-site residue.

Belongs to the glyoxalase I family. The cofactor is Zn(2+).

It carries out the reaction (R)-S-lactoylglutathione = methylglyoxal + glutathione. It participates in secondary metabolite metabolism; methylglyoxal degradation; (R)-lactate from methylglyoxal: step 1/2. Catalyzes the conversion of hemimercaptal, formed from methylglyoxal and glutathione, to S-lactoylglutathione. The polypeptide is Lactoylglutathione lyase (Arabidopsis thaliana (Mouse-ear cress)).